A 372-amino-acid chain; its full sequence is DNA replication and repair protein RecF (372 aa).

Residue 30–37 (GENAQGKT) coordinates ATP.

It belongs to the RecF family.

It is found in the cytoplasm. Functionally, the RecF protein is involved in DNA metabolism; it is required for DNA replication and normal SOS inducibility. RecF binds preferentially to single-stranded, linear DNA. It also seems to bind ATP. The chain is DNA replication and repair protein RecF from Geobacillus thermodenitrificans (strain NG80-2).